The primary structure comprises 1040 residues: MQVLPPGSTGGPSRLFILRPVATTLLMAAILLAGIIGYRFLPVAALPEVDYPTIQVVTLYPGASPDVMTSAVTAPLERQFGQMSGLKQMSSQSSGGASVVTLQFQLTLPLDVAEQEVQAAINAATNLLPSDLPNPPIYSKVNPADPPIMTLAVTSNAMPMTQVEDMVETRVAQKISQVSGVGLVTLAGGQRPAVRVKLNAQAIAALGLTSETVRTAITGANVNSAKGSLDGPERAVTLSANDQMQSADEYRRLIIAYQNGAPVRLGDVATVEQGAENSWLGAWANQAPAIVMNVQRQPGANIIATADSIRQMLPQLTESLPKSVKVTVLSDRTTNIRASVRDTQFELMLAIALVVMIIYLFLRNIPATIIPGVAVPLSLIGTFAVMVFLDFSINNLTLMALTIATGFVVDDAIVVIENISRYIEKGEKPLAAALKGAGEIGFTIISLTFSLIAVLIPLLFMGDIVGRLFREFAVTLAVAILISAVVSLTLTPMMCARMLSQQSLRKQNRFSRACERMFDRVIASYGRGLAKVLNHPWLTLSVAFATLLLSVMLWIVIPKGFFPVQDNGIIQGTLQAPQSSSYASMAQRQRQVAERILQDPAVQSLTTFVGVDGANPTLNSARLQINLKPLDARDDRVQQVISRLQTAVATIPGVALYLQPTQDLTIDTQVSRTQYQFTLQATTLDALSHWVPKLQNALQSLPQLSEVSSDWQDRGLAAWVNVDRDSASRLGISMADVDNALYNAFGQRLISTIYTQANQYRVVLEHNTASTPGLAALETIRLTSRDGGTVPLSAIARIEQRFAPLSINHLDQFPVTTFSFNVPEGYSLGDAVQAILDTEKTLALPADITTQFQGSTLAFQAALGSTVWLIVAAVVAMYIVLGVLYESFIHPITILSTLPTAGVGALLALIIAGSELDIIAIIGIILLIGIVKKNAIMMIDFALAAEREQGMSPRDAIFQACLLRFRPILMTTLAALLGALPLMLSTGVGAELRRPLGIAMVGGLLVSQVLTLFTTPVIYLLFDRLSLYVKSRFPRHKEEA.

A run of 12 helical transmembrane segments spans residues 25–45 (LLMA…PVAA), 347–367 (LMLA…NIPA), 369–389 (IIPG…MVFL), 396–416 (LTLM…IVVI), 440–460 (IGFT…PLLF), 472–492 (FAVT…TLTP), 537–557 (WLTL…WIVI), 863–883 (LGST…VLGV), 888–908 (FIHP…ALLA), 910–930 (IIAG…LIGI), 968–988 (ILMT…STGV), and 998–1018 (IAMV…TPVI).

Belongs to the resistance-nodulation-cell division (RND) (TC 2.A.6) family. MdtB subfamily. As to quaternary structure, part of a tripartite efflux system composed of MdtA, MdtB and MdtC. MdtB forms a heteromultimer with MdtC.

It is found in the cell inner membrane. This Salmonella paratyphi B (strain ATCC BAA-1250 / SPB7) protein is Multidrug resistance protein MdtB.